We begin with the raw amino-acid sequence, 106 residues long: Secreted RxLR effector protein 18 (106 aa).

The signal sequence occupies residues 1–17 (MRGSTAMLLAAIALFSS). The RxLR-dEER signature appears at 28-39 (RTLRSFEELEER).

Belongs to the RxLR effector family.

Its subcellular location is the secreted. It localises to the host cell. In terms of biological role, effector that may act as a suppressor of cell death to interrupt plant immunity. I. The polypeptide is Secreted RxLR effector protein 18 (Plasmopara viticola (Downy mildew of grapevine)).